A 211-amino-acid chain; its full sequence is Uracil phosphoribosyltransferase (211 aa).

5-phospho-alpha-D-ribose 1-diphosphate is bound by residues R78, R103, and 130 to 138 (DPMLATGGT). Residues I196 and 201–203 (GDA) each bind uracil. D202 is a binding site for 5-phospho-alpha-D-ribose 1-diphosphate.

The protein belongs to the UPRTase family. Mg(2+) is required as a cofactor.

The enzyme catalyses UMP + diphosphate = 5-phospho-alpha-D-ribose 1-diphosphate + uracil. The protein operates within pyrimidine metabolism; UMP biosynthesis via salvage pathway; UMP from uracil: step 1/1. Its activity is regulated as follows. Allosterically activated by GTP. Functionally, catalyzes the conversion of uracil and 5-phospho-alpha-D-ribose 1-diphosphate (PRPP) to UMP and diphosphate. The chain is Uracil phosphoribosyltransferase from Kineococcus radiotolerans (strain ATCC BAA-149 / DSM 14245 / SRS30216).